A 433-amino-acid polypeptide reads, in one-letter code: MSKIVKVIGREIIDSRGNPTVEAEVHLEGGFVGLAAAPSGASTGSREALELRDGDKSRFLGKGVTKAVDAVNGPIAQALTCKDAKDQAALDKTMIDLDGTENKSKFGANAILAVSLAAAKAASASKGMPLYEHIAELNGTAGKFSMPLPMMNIINGGEHADNNVDIQEFMIQPVGAKSIKEAVRMGSEVFHNLAKVLKSKGMNTAVGDEGGYAPNLESNAAALAAIKEAVEKAGYMLGKDITLAMDCAASEFFGEATGNYNLKGEGKTFTSQEFTHYLEDLTKQYPIVSIEDGLNESDWDGFAYQTKVLGDKIQLVGDDLFVTNTKILKEGIEKGIANSILIKFNQIGSLTETLAAIKMAKDAGYTTIISHRSGETEDATIADLAVGTAAGQIKTGSMSRSDRVAKYNQLIRIEEALGDRAPFNGLREVKGQA.

Gln167 serves as a coordination point for (2R)-2-phosphoglycerate. The active-site Proton donor is Glu209. The Mg(2+) site is built by Asp246, Glu291, and Asp318. Residues Lys343, Arg372, Ser373, and Lys394 each contribute to the (2R)-2-phosphoglycerate site. The active-site Proton acceptor is the Lys343.

The protein belongs to the enolase family. In terms of assembly, component of the RNA degradosome, a multiprotein complex involved in RNA processing and mRNA degradation. Requires Mg(2+) as cofactor.

It localises to the cytoplasm. The protein resides in the secreted. Its subcellular location is the cell surface. The enzyme catalyses (2R)-2-phosphoglycerate = phosphoenolpyruvate + H2O. It functions in the pathway carbohydrate degradation; glycolysis; pyruvate from D-glyceraldehyde 3-phosphate: step 4/5. In terms of biological role, catalyzes the reversible conversion of 2-phosphoglycerate (2-PG) into phosphoenolpyruvate (PEP). It is essential for the degradation of carbohydrates via glycolysis. The sequence is that of Enolase from Sodalis glossinidius (strain morsitans).